Reading from the N-terminus, the 221-residue chain is Uridylate kinase (221 aa).

7 to 11 (KISGK) is an ATP binding site. Gly-43 is a binding site for UMP. Gly-44 and Arg-48 together coordinate ATP. UMP contacts are provided by residues Asp-62 and 109–115 (LQPGQST). Residues Thr-135 and Tyr-141 each coordinate ATP.

The protein belongs to the UMP kinase family. As to quaternary structure, homohexamer.

It localises to the cytoplasm. The catalysed reaction is UMP + ATP = UDP + ADP. Its pathway is pyrimidine metabolism; CTP biosynthesis via de novo pathway; UDP from UMP (UMPK route): step 1/1. Inhibited by UTP. Its function is as follows. Catalyzes the reversible phosphorylation of UMP to UDP. The chain is Uridylate kinase from Ignicoccus hospitalis (strain KIN4/I / DSM 18386 / JCM 14125).